The following is a 241-amino-acid chain: Eukaryotic translation initiation factor 3 subunit J (241 aa).

A disordered region spans residues 1–94 (MDVSWDADNF…EKTAEEMTPE (94 aa)). The span at 26–45 (GEDEDDNVKESWEDEEEEKK) shows a compositional bias: acidic residues. Positions 61–118 (KKKIHDKIAERERQEREKAERLVTEKTAEEMTPEQKLAEKLRQQKLQEESDLRLAMET) form a coiled coil. Residues 66-89 (DKIAERERQEREKAERLVTEKTAE) are compositionally biased toward basic and acidic residues.

This sequence belongs to the eIF-3 subunit J family. In terms of assembly, component of the eukaryotic translation initiation factor 3 (eIF-3) complex.

The protein localises to the cytoplasm. Component of the eukaryotic translation initiation factor 3 (eIF-3) complex, which is involved in protein synthesis of a specialized repertoire of mRNAs and, together with other initiation factors, stimulates binding of mRNA and methionyl-tRNAi to the 40S ribosome. The eIF-3 complex specifically targets and initiates translation of a subset of mRNAs involved in cell proliferation. This Bombyx mori (Silk moth) protein is Eukaryotic translation initiation factor 3 subunit J.